The chain runs to 304 residues: Probable 5-dehydro-4-deoxyglucarate dehydratase (304 aa).

The protein belongs to the DapA family.

The catalysed reaction is 5-dehydro-4-deoxy-D-glucarate + H(+) = 2,5-dioxopentanoate + CO2 + H2O. It participates in carbohydrate acid metabolism; D-glucarate degradation; 2,5-dioxopentanoate from D-glucarate: step 2/2. This is Probable 5-dehydro-4-deoxyglucarate dehydratase from Methylobacterium radiotolerans (strain ATCC 27329 / DSM 1819 / JCM 2831 / NBRC 15690 / NCIMB 10815 / 0-1).